Consider the following 528-residue polypeptide: tRNA pseudouridine synthase 1 (528 aa).

The interval 1 to 59 is disordered; sequence MPSDASTGYVDDQPGDEAYKRGALYKQTKARRADYDSDKEAKRPCTEDSDVALAGTSEE. Over residues 31-46 the composition is skewed to basic and acidic residues; it reads RRADYDSDKEAKRPCT. Catalysis depends on aspartate 126, which acts as the Nucleophile. 2 stretches are compositionally biased toward polar residues: residues 486–495 and 506–528; these read SSSPQENASP and GDNT…QSDA. Residues 486–528 are disordered; that stretch reads SSSPQENASPEAQKAPETPAGDNTISAEQPKTATEVPTTQSDA.

It belongs to the tRNA pseudouridine synthase TruA family. Zn(2+) serves as cofactor.

Its subcellular location is the nucleus. The catalysed reaction is a uridine in tRNA = a pseudouridine in tRNA. The enzyme catalyses uridine in snRNA = pseudouridine in snRNA. It carries out the reaction a uridine in mRNA = a pseudouridine in mRNA. Functionally, formation of pseudouridine at positions 27 and 28 in the anticodon stem and loop of transfer RNAs; at positions 34 and 36 of intron-containing precursor tRNA(Ile) and at position 35 in the intron-containing tRNA(Tyr). Catalyzes pseudouridylation at position 44 in U2 snRNA. Also catalyzes pseudouridylation of mRNAs. This chain is tRNA pseudouridine synthase 1 (PUS1), found in Eremothecium gossypii (strain ATCC 10895 / CBS 109.51 / FGSC 9923 / NRRL Y-1056) (Yeast).